The following is a 317-amino-acid chain: Sulfate adenylyltransferase subunit 2 (317 aa).

Disordered regions lie at residues 1–21 (MPDS…APLD) and 298–317 (RAID…EGYF).

It belongs to the PAPS reductase family. CysD subfamily. As to quaternary structure, heterodimer composed of CysD, the smaller subunit, and CysN.

It carries out the reaction sulfate + ATP + H(+) = adenosine 5'-phosphosulfate + diphosphate. It functions in the pathway sulfur metabolism; hydrogen sulfide biosynthesis; sulfite from sulfate: step 1/3. In terms of biological role, with CysN forms the ATP sulfurylase (ATPS) that catalyzes the adenylation of sulfate producing adenosine 5'-phosphosulfate (APS) and diphosphate, the first enzymatic step in sulfur assimilation pathway. APS synthesis involves the formation of a high-energy phosphoric-sulfuric acid anhydride bond driven by GTP hydrolysis by CysN coupled to ATP hydrolysis by CysD. This chain is Sulfate adenylyltransferase subunit 2, found in Rhizobium etli (strain CIAT 652).